The primary structure comprises 33 residues: U1-pseudomyrmecitoxin-Pt1 subunit LS1 (33 aa).

The protein belongs to the myrmexin family. In terms of assembly, heterodimer composed of subunit LS1 and subunit SS1 (U1-PSDTX-Pt1b), heterodimer composed of subunit LS1 and SS2 (U1-PSDTX-Pt1b), and heterodimer composed of subunit LS1 and SS3; disulfide-linked. In terms of tissue distribution, expressed by the venom gland.

Its subcellular location is the secreted. In terms of biological role, this heterodimer may have anti-inflammatory properties, since the myrmexin complex (composed of 6 SS-LS heterodimers) inhibits carrageenin-induced edema in a dose-dependent manner (after subcutaneous injection into rats). The sequence is that of U1-pseudomyrmecitoxin-Pt1 subunit LS1 from Pseudomyrmex triplarinus (Ant).